The sequence spans 65 residues: Ferredoxin-1 (65 aa).

The 4Fe-4S ferredoxin-type domain maps to 2-30; the sequence is AMKIDPELCTSCGDCEPVCPTNAIAPKKG. [4Fe-4S] cluster contacts are provided by Cys10, Cys13, Cys16, Cys20, Cys39, Cys42, Cys51, and Cys55.

[4Fe-4S] cluster serves as cofactor.

Its function is as follows. Ferredoxins are iron-sulfur proteins that transfer electrons in a wide variety of metabolic reactions. This ferredoxin probably participates in nitrogen fixation. The protein is Ferredoxin-1 (fdxN) of Rhodobacter capsulatus (Rhodopseudomonas capsulata).